Reading from the N-terminus, the 309-residue chain is 2-dehydro-3-deoxygluconokinase (309 aa).

Substrate-binding positions include G34–N38, Y89, Y103–R105, and R167. ATP is bound by residues N165 to R167, S193, K219 to A225, G248 to D251, and N275. Substrate is bound at residue D251. D251 (proton acceptor) is an active-site residue. D287 is a substrate binding site.

This sequence belongs to the carbohydrate kinase pfkB family. As to quaternary structure, homohexamer; trimer of dimers.

It catalyses the reaction 2-dehydro-3-deoxy-D-gluconate + ATP = 2-dehydro-3-deoxy-6-phospho-D-gluconate + ADP + H(+). It participates in carbohydrate acid metabolism; 2-dehydro-3-deoxy-D-gluconate degradation; D-glyceraldehyde 3-phosphate and pyruvate from 2-dehydro-3-deoxy-D-gluconate: step 1/2. Functionally, involved in the degradation of glucose via the semi-phosphorylative Entner-Doudoroff pathway. Catalyzes the phosphorylation of 2-keto-3-deoxygluconate (KDG) to produce 2-keto-3-deoxy-6-phosphogluconate (KDPG). The polypeptide is 2-dehydro-3-deoxygluconokinase (kdgK) (Thermus thermophilus (strain ATCC 27634 / DSM 579 / HB8)).